The primary structure comprises 299 residues: Coenzyme PQQ synthesis protein B (299 aa).

The protein belongs to the PqqB family.

Its pathway is cofactor biosynthesis; pyrroloquinoline quinone biosynthesis. May be involved in the transport of PQQ or its precursor to the periplasm. This Methylobacterium nodulans (strain LMG 21967 / CNCM I-2342 / ORS 2060) protein is Coenzyme PQQ synthesis protein B.